The chain runs to 115 residues: Large ribosomal subunit protein P2 (115 aa).

Position 1 is an N-acetylmethionine (M1). Residues S17 and S19 each carry the phosphoserine modification. At K21 the chain carries N6-acetyllysine; alternate. K21 is modified (N6-succinyllysine; alternate). The span at A76–A90 shows a compositional bias: low complexity. The disordered stretch occupies residues A76 to D115. Phosphoserine occurs at positions 79 and 86. The span at A91–E101 shows a compositional bias: basic and acidic residues. S102 and S105 each carry phosphoserine.

This sequence belongs to the eukaryotic ribosomal protein P1/P2 family. As to quaternary structure, heterodimer with RPLP1 at the lateral ribosomal stalk of the large ribosomal subunit.

Plays an important role in the elongation step of protein synthesis. In Bos taurus (Bovine), this protein is Large ribosomal subunit protein P2 (RPLP2).